The sequence spans 168 residues: MPRSRINGNFLDKTFSIVANILLRIIPTTSGEKEAFTYYRDRMSAQSEGNYAEALQNYYEAMRLEIDPYDRSYILYNIGLIHTSNGEHMKALEYYFRALERNPFLPQAFNNMAVICHYRGEQAIQQGDSEIAGAWFDQAAEYWKQALALTPGNYIEAHNWLKITGRFD.

3 TPR repeats span residues 35–68 (AFTY…EIDP), 72–105 (SYIL…NPFL), and 120–153 (GEQA…TPGN).

This sequence belongs to the Ycf3 family.

It localises to the plastid membrane. Functionally, essential for the assembly of the photosystem I (PSI) complex. May act as a chaperone-like factor to guide the assembly of the PSI subunits. In Cuscuta reflexa (Southern Asian dodder), this protein is Photosystem I assembly protein Ycf3.